A 280-amino-acid polypeptide reads, in one-letter code: MSSSWIVGLLAFLVSLVALTQGLPLLEDLDEKSVPDGRIVGGYATDIAQVPYQISLRYKGITTPENPFRHRCGGSIFNETTIVTAAHCVIGTVASQYKVVAGTNFQTGSDGVITNVKEIVMHEGYYSGAAYNNDIAILFVDPPLPLNNFTIKAIKLALEQPIEGTVSKVSGWGTTSPGGYSSNQLLAVDVPIVSNELCDQDYEDFGDETYRITSAMLCAGKRGVGGADACQGDSGGPLAVRDELYGVVSWGNSCALPNYPGVYANVAYLRPWIDAVLAGL.

Positions 1-22 (MSSSWIVGLLAFLVSLVALTQG) are cleaved as a signal peptide. A propeptide spans 23–38 (LPLLEDLDEKSVPDGR) (activation peptide). The Peptidase S1 domain occupies 39–278 (IVGGYATDIA…LRPWIDAVLA (240 aa)). The cysteines at positions 72 and 88 are disulfide-linked. Residues H87 and D134 each act as charge relay system in the active site. Disulfide bonds link C198–C218 and C230–C254. The active-site Charge relay system is S234.

Belongs to the peptidase S1 family.

Its subcellular location is the secreted. The protein localises to the extracellular space. The enzyme catalyses Preferential cleavage: Arg-|-Xaa, Lys-|-Xaa.. The polypeptide is Trypsin zeta (zetaTry) (Drosophila melanogaster (Fruit fly)).